A 225-amino-acid chain; its full sequence is Jeltraxin (225 aa).

The N-terminal stretch at 1 to 19 (MKGLVIFFCLFYGCHVAGA) is a signal peptide. A Pentraxin (PTX) domain is found at 21–223 (GKTIMLFPQK…IVVLRNQFIP (203 aa)). The cysteines at positions 51 and 112 are disulfide-linked. Ca(2+) is bound by residues D75 and N76. The N-linked (GlcNAc...) asparagine glycan is linked to N87. 4 residues coordinate Ca(2+): E153, Q154, D155, and Q165. Residue N207 is glycosylated (N-linked (GlcNAc...) asparagine).

In terms of assembly, homodecamer consisting of two homopentamer units. Pentraxin (or pentaxin) have a discoid arrangement of 5 non-covalently bound subunits. Requires Ca(2+) as cofactor. Glycosylated. In terms of tissue distribution, oviduct. Highest expression levels were detected in the pars convoluta with lower levels detected in the pars recta. No expression was detected in the pars uterina.

The protein resides in the secreted. In terms of biological role, calcium-dependent beta-galactose specific lectin. In Lepidobatrachus laevis (Budgett's frog), this protein is Jeltraxin.